The primary structure comprises 154 residues: Transcriptional repressor NrdR (154 aa).

A zinc finger spans residues 3–34 (CPFCTHPDTRVADSRLMEERNAVRRRRHCPNC). Residues 49 to 139 (PAVIGPDKKR…LHKRFDNPAD (91 aa)) form the ATP-cone domain.

This sequence belongs to the NrdR family. It depends on Zn(2+) as a cofactor.

Negatively regulates transcription of bacterial ribonucleotide reductase nrd genes and operons by binding to NrdR-boxes. This chain is Transcriptional repressor NrdR, found in Neisseria meningitidis serogroup A / serotype 4A (strain DSM 15465 / Z2491).